The chain runs to 130 residues: MLYNIPCRIYILSTLSLCISGIVSTATATSSETKISNEETLVVTTNRSASNLWESPATIQVIDQQTLQNSTNASIADNLQDIPGVEITDNSLAGRKQIRIRGWICPYISRHLLSLNPLQARCRRYSRGER.

The signal sequence occupies residues 1 to 28 (MLYNIPCRIYILSTLSLCISGIVSTATA). Positions 51–130 (NLWESPATIQ…RCRRYSRGER (80 aa)) constitute a TBDR plug domain.

This sequence belongs to the TonB-dependent receptor family.

The sequence is that of Protein YoeA (yoeA) from Escherichia coli (strain K12).